A 486-amino-acid chain; its full sequence is MKKLLRLFFPLSLRVRFLLATAAVVLVLSLAYGMVALIGYSVSFDKTTFRLLRGESNLFYTLAQWENNKLHVELPENIDKQSPTMTLIYDENGQLLWAQRDVPWLMKMIQPDWLKSNGFHEIEADVNDTSLLLSGDHSIQQQLQEVREDDDDAEMTHSVAVNVYPATSRMPKLTIVVVDTIPVELKSSYMVWSWFIYVLSANLLLVIPLLWVAAWWSLRPIEALAKEVRELEEHNRELLNPATTRELTSLVRNLNRLLKSERERYDKYRTTLTDLTHSLKTPLAVLQSTLRSLRSEKMSVSDAEPVMLEQISRISQQIGYYLHRASMRGGTLLSRELHPVAPLLDNLTSALNKVYQRKGVNISLDISPEISFVGEQNDFVEVMGNVLDNACKYCLEFVEISARQTDEHLYIVVEDDGPGIPLSKREVIFDRGQRVDTLRPGQGVGLAVAREITEQYEGKIVAGESMLGGARMEVIFGRQHSAPKDE.

The Cytoplasmic segment spans residues Met1–Arg16. A helical membrane pass occupies residues Phe17 to Leu37. Residues Ile38–Trp194 lie on the Periplasmic side of the membrane. Asp151 and Asp152 together coordinate a divalent metal cation. Residues Phe195–Trp215 traverse the membrane as a helical segment. Positions Trp215 to Asp266 constitute an HAMP domain. At Trp216–Glu486 the chain is on the cytoplasmic side. The Histidine kinase domain maps to Asp274–His480. His277 carries the post-translational modification Phosphohistidine; by autocatalysis. Asn385 provides a ligand contact to Mg(2+). ATP is bound by residues Asn385 to Tyr393, Asp415 to Ile420, and Arg434 to Leu446. Gln442 contacts Mg(2+).

Homodimer.

It localises to the cell inner membrane. It carries out the reaction ATP + protein L-histidine = ADP + protein N-phospho-L-histidine.. Its function is as follows. Member of the two-component regulatory system PhoP/PhoQ involved in virulence and adaptation to low Mg(2+) environments. In low periplasmic Mg(2+), PhoQ functions as a membrane-associated protein kinase that undergoes autophosphorylation and subsequently transfers the phosphate to PhoP, which results in the expression of PhoP-activated genes (PAG) and repression of PhoP-repressed genes (PRG). In high periplasmic Mg(2+), acts as a protein phosphatase that dephosphorylates phospho-PhoP, which results in the repression of PAG and may lead to expression of some PRG. Necessary for resistance to killing by polymorphonuclear leukocytes (PMNs) and cationic antimicrobial peptides (CAMP) they produce. This chain is Virulence sensor protein PhoQ (phoQ), found in Shigella flexneri.